Reading from the N-terminus, the 619-residue chain is Alpha-(1,6)-fucosyltransferase (619 aa).

Topologically, residues M1–R17 are cytoplasmic. The chain crosses the membrane as a helical; Signal-anchor for type II membrane protein span at residues A18–T38. Topologically, residues N39 to I619 are lumenal. Intrachain disulfides connect C253–C315, C261–C279, and C267–C271. In terms of domain architecture, GT23 spans N255–L539. Residues P345 to P351 carry the SH3-binding motif. The segment at R411–R412 is important for donor substrate binding. An intrachain disulfide couples C511 to C518. In terms of domain architecture, SH3 spans Q548 to D609.

Belongs to the glycosyltransferase 23 family. Mn(2+) serves as cofactor. It depends on Mg(2+) as a cofactor.

It is found in the golgi apparatus. It localises to the golgi stack membrane. It catalyses the reaction N(4)-{beta-D-GlcNAc-(1-&gt;2)-alpha-D-Man-(1-&gt;3)-[beta-D-GlcNAc-(1-&gt;2)-alpha-D-Man-(1-&gt;6)]-beta-D-Man-(1-&gt;4)-beta-D-GlcNAc-(1-&gt;4)-beta-D-GlcNAc}-L-asparaginyl-[protein] + GDP-beta-L-fucose = an N(4)-{beta-D-GlcNAc-(1-&gt;2)-alpha-D-Man-(1-&gt;3)-[beta-D-GlcNAc-(1-&gt;2)-alpha-D-Man-(1-&gt;6)]-beta-D-Man-(1-&gt;4)-beta-D-GlcNAc-(1-&gt;4)-[alpha-L-Fuc-(1-&gt;6)]-beta-D-GlcNAc}-L-asparaginyl-[protein] + GDP + H(+). It participates in protein modification; protein glycosylation. Its function is as follows. Catalyzes the addition of fucose in alpha 1-6 linkage to the first GlcNAc residue, next to the peptide chains in N-glycans. The addition is prevented if the GlcNAc residue is already fucosylated. This is Alpha-(1,6)-fucosyltransferase (FucT6) from Drosophila melanogaster (Fruit fly).